The sequence spans 452 residues: Phosphoglucosamine mutase (452 aa).

Residue Ser-98 is the Phosphoserine intermediate of the active site. The Mg(2+) site is built by Ser-98, Asp-239, Asp-241, and Asp-243. A Phosphoserine modification is found at Ser-98.

It belongs to the phosphohexose mutase family. Mg(2+) is required as a cofactor. Post-translationally, activated by phosphorylation.

The enzyme catalyses alpha-D-glucosamine 1-phosphate = D-glucosamine 6-phosphate. Its function is as follows. Catalyzes the conversion of glucosamine-6-phosphate to glucosamine-1-phosphate. The protein is Phosphoglucosamine mutase of Anaplasma marginale (strain Florida).